The sequence spans 679 residues: Protein asunder (679 aa).

Residues 519-541 (RLKVNKTKDQYRLFYRELEQLIQ) adopt a coiled-coil conformation. Positions 564-610 (GDASNKSDPSAAHLRSYTESPLSPERLEPTNSVNSSSSSILKASKRR) are disordered. The short motif at 604 to 610 (LKASKRR) is the Nuclear localization signal (NLS) element.

This sequence belongs to the Integrator subunit 13 family. As to quaternary structure, belongs to the multiprotein complex Integrator, at least composed of IntS1, IntS2, IntS3, IntS4, omd/IntS5, IntS6, defl/IntS7, IntS8, IntS9, IntS10, IntS11, IntS12, asun/IntS13, IntS14 and IntS15. The core complex associates with protein phosphatase 2A subunits mts/PP2A and Pp2A-29B, to form the Integrator-PP2A (INTAC) complex. Phosphorylated.

It localises to the nucleus. The protein resides in the cytoplasm. It is found in the perinuclear region. Its function is as follows. Component of the integrator complex, a multiprotein complex that terminates RNA polymerase II (Pol II) transcription in the promoter-proximal region of genes. The integrator complex provides a quality checkpoint during transcription elongation by driving premature transcription termination of transcripts that are unfavorably configured for transcriptional elongation: the complex terminates transcription by (1) catalyzing dephosphorylation of the C-terminal domain (CTD) of Pol II subunit Polr2A/Rbp1 and Spt5, and (2) degrading the exiting nascent RNA transcript via endonuclease activity. The integrator complex is also involved in the 3'-end processing of the U7 snRNA, and also the spliceosomal snRNAs U1, U2, U4 and U5. The chain is Protein asunder (asun) from Drosophila mojavensis (Fruit fly).